The primary structure comprises 357 residues: SUN domain-containing protein 3 (357 aa).

Over 1 to 47 the chain is Nuclear; it reads MSGKTKARRAAMFFRRCSEDASGSASGNALLSEDENPDANGVTRSWK. A helical membrane pass occupies residues 48 to 64; the sequence is IILSTMLTLTFLLVGLL. The Perinuclear space segment spans residues 65-357; the sequence is NHQWLKETDV…RVHGTPGKHI (293 aa). The stretch at 98 to 146 forms a coiled coil; it reads RLRMPKEQLELLKKESQNLENNFRQILFLIEQIDVLKALLRDMKDGMDN. In terms of domain architecture, SUN spans 193 to 354; sequence GASIIEAGTS…YRFRVHGTPG (162 aa).

As to quaternary structure, self-associates. Interacts with SYNE1 and SPAG4/SUN4. Proposed to form a spermatogenesis-specific LINC complex with SYNE1 during sperm head formation possibly implicating a SUN domain-based heterotrimer with SPAG4/SUN4 associating with SYNE1.

The protein localises to the membrane. Its subcellular location is the nucleus envelope. It localises to the nucleus inner membrane. Functionally, as a probable component of the LINC (LInker of Nucleoskeleton and Cytoskeleton) complex, involved in the connection between the nuclear lamina and the cytoskeleton. The nucleocytoplasmic interactions established by the LINC complex play an important role in the transmission of mechanical forces across the nuclear envelope and in nuclear movement and positioning. May be involved in nuclear remodeling during sperm head formation in spermatogenesis. A probable SUN3:SYNE1 LINC complex may tether spermatid nuclei to posterior cytoskeletal structures such as the manchette. This Homo sapiens (Human) protein is SUN domain-containing protein 3 (SUN3).